A 285-amino-acid chain; its full sequence is Golgi phosphoprotein 3-like (285 aa).

Positions 1 to 43 (MTTLTHRTRRTEVSKSCEKKIESEEDTNQERSPDNEDPGDSKD) are disordered. Over residues 10–43 (RTEVSKSCEKKIESEEDTNQERSPDNEDPGDSKD) the composition is skewed to basic and acidic residues. Positions 67 and 76 each coordinate a 1,2-diacyl-sn-glycero-3-phospho-(1D-myo-inositol 4-phosphate). The residue at position 112 (Ser112) is a Phosphoserine. The a 1,2-diacyl-sn-glycero-3-phospho-(1D-myo-inositol 4-phosphate) site is built by Arg157 and Arg160. Residues 176 to 187 (EKQNFLLFDMTT) are beta-hairpin required for oligomerization.

It belongs to the GOLPH3/VPS74 family. In terms of assembly, homooligomer. Does not interact MYO18; differs from GOLPH3 by its inability to interact with MYO18. May interact with ARF1.

The protein resides in the golgi apparatus. The protein localises to the golgi stack membrane. Its subcellular location is the trans-Golgi network membrane. Functionally, phosphatidylinositol-4-phosphate-binding protein that may antagonize the action of GOLPH3 which is required for the process of vesicle budding at the Golgi and anterograde transport to the plasma membrane. This is Golgi phosphoprotein 3-like (Golph3l) from Rattus norvegicus (Rat).